Consider the following 444-residue polypeptide: Docking protein 3 (444 aa).

The 117-residue stretch at 7 to 123 (PVKDGILYQQ…WVDPICQLAF (117 aa)) folds into the PH domain. The residue at position 138 (Ser-138) is a Phosphoserine. Residues 157–261 (EVTEFPVIVQ…ARQRERLPEL (105 aa)) form the IRS-type PTB domain. At Ser-274 the chain carries Phosphoserine. The tract at residues 278–299 (LEPPGELREVAPGFELPTPRKL) is disordered. Ser-308 and Ser-314 each carry phosphoserine. A Phosphotyrosine modification is found at Tyr-325. The interval 354 to 390 (GLTNGGPEAQEGPPGGRSPLGSPIYHNTEDLSWPGSA) is disordered. Low complexity predominate over residues 358–376 (GGPEAQEGPPGGRSPLGSP). The residue at position 371 (Ser-371) is a Phosphoserine.

The protein belongs to the DOK family. Type A subfamily. On tyrosine phosphorylation, interacts with CSK and INPP5D/SHIP1 via their SH2 domains. Both Tyr-325 and Tyr-343 are required for interaction with INPP5D. Only Tyr-325 is required for interaction with CSK. Binds ABL1 through the PTB domain and in a kinase-dependent manner. Does not interact with RasGAP. Post-translationally, constitutively tyrosine-phosphorylated. On IL2 stimulation, phosphorylated on C-terminal tyrosine residues possibly by Src kinases. Can also be phosphorylated by ABL1 kinase. As to expression, predominantly expressed in bone marrow, spleen and lung. Low levels in heart, brain, liver, muscle, thymus, kidney and testis. Highly expressed in B-cells and macrophages.

The protein resides in the cytoplasm. Its subcellular location is the cell membrane. In terms of biological role, DOK proteins are enzymatically inert adaptor or scaffolding proteins. They provide a docking platform for the assembly of multimolecular signaling complexes. DOK3 is a negative regulator of JNK signaling in B-cells through interaction with INPP5D/SHIP1. May modulate ABL1 function. The polypeptide is Docking protein 3 (Dok3) (Mus musculus (Mouse)).